Here is a 251-residue protein sequence, read N- to C-terminus: MKVHEFSNGFSSSWDQHDSTSSLSLSCKRLRPLAPKLSGSPPSPPSSSSGVTSATFDLKNFIRPDQTGPTKFEHKRDPPHQLETHPGGTRWNPTQEQIGILEMLYKGGMRTPNAQQIEHITLQLGKYGKIEGKNVFYWFQNHKARERQKQKRNNLISLSCQSSFTTTGVFNPSVTMKTRTSSSLDIMREPMVEKEELVEENEYKRTCRSWGFENLEIENRRNKNSSTMATTFNKIIDNVTLELFPLHPEGR.

Disordered stretches follow at residues 1-21 (MKVHEFSNGFSSSWDQHDSTS) and 33-93 (LAPK…RWNP). Low complexity predominate over residues 11–21 (SSSWDQHDSTS). The span at 71–83 (KFEHKRDPPHQLE) shows a compositional bias: basic and acidic residues. Positions 86-150 (PGGTRWNPTQ…NHKARERQKQ (65 aa)) form a DNA-binding region, homeobox; WUS-type.

The protein belongs to the WUS homeobox family. In terms of tissue distribution, expressed in the vasculature of the whole plant (roots, hypocotyls, cotyledons and leaves), trichomes and stomata. Expresse in the developing vascular bundles of root and shoot lateral organs.

Its subcellular location is the nucleus. Promotes differentiation and/or maintenance of the vascular procambium, the initial cells of the developing vasculature. Part of the TDIF-TDR-WOX4 signaling pathway that plays a crucial role in the maintenance of the vascular meristem organization during secondary growth. Is required for promoting the proliferation of procambial/cambial stem cells but not for repressing their commitment to xylem differentiation in response to the TDIF signal. Acts redundantly with WOX14 downstream of the TDR/PXY receptor kinase to regulate procambial cell proliferation and differentiation in vascular tissue, independently of any role in vascular. Acts as a cambium regulator in the inflorescence stem. Is required for auxin-dependent cambium stimulation in the inflorescence stem. The polypeptide is WUSCHEL-related homeobox 4 (WOX4) (Arabidopsis thaliana (Mouse-ear cress)).